The chain runs to 55 residues: MVIGLFVLSIVMLIVSFIAQSFTLLSIMISFLLFTSAVVLAMFRYFRKKNAISNN.

A run of 2 helical transmembrane segments spans residues valine 2–alanine 19 and leucine 24–phenylalanine 46.

It localises to the cell membrane. This is an uncharacterized protein from Alkalihalophilus pseudofirmus (strain ATCC BAA-2126 / JCM 17055 / OF4) (Bacillus pseudofirmus).